A 468-amino-acid polypeptide reads, in one-letter code: Phosphatidylinositol-binding clathrin assembly protein LAP (468 aa).

The ENTH domain occupies 16 to 158 (RHSLAGQGLA…LSYRAMAFDF (143 aa)). The segment at 438 to 468 (NAGDGTAKYDGGAGSSPFDWGATDDDGGAAQ) is disordered. The segment covering 459–468 (ATDDDGGAAQ) has biased composition (acidic residues).

It belongs to the PICALM/SNAP91 family. In terms of assembly, binds clathrin and phosphatidylinositol 4,5-bisphosphate. In embryos, expression is seen in central and peripheral nervous systems (brain and ventral nerve cord) and Garland cells. Coexpressed with clathrin at presynaptic boutons of neuromuscular junctions.

The protein resides in the membrane. It is found in the clathrin-coated pit. Its subcellular location is the golgi apparatus. The protein localises to the cytoplasmic vesicle. It localises to the clathrin-coated vesicle. Its function is as follows. Assembly protein recruiting clathrin and adaptor protein complex 2 (AP2) to cell membranes at sites of coated-pit formation and clathrin-vesicle assembly. May be required to determine the amount of membrane to be recycled, possibly by regulating the size of the clathrin cage. Involved in AP2-dependent clathrin-mediated endocytosis at the neuromuscular junction. The polypeptide is Phosphatidylinositol-binding clathrin assembly protein LAP (lap) (Drosophila melanogaster (Fruit fly)).